The primary structure comprises 260 residues: Uroplakin-1b (260 aa).

Topologically, residues 2 to 15 (AKDDSTVRCFQGLL) are cytoplasmic. Residues 16-36 (IFGNVIIGMCSIALMAECIFF) form a helical membrane-spanning segment. At 37-60 (VSDQNSLYPLLEATNNDDIYAAAW) the chain is on the extracellular side. Residues 61 to 81 (IGMFVGICLFCLSVLGIVGIM) form a helical membrane-spanning segment. At 82–86 (KSNRK) the chain is on the cytoplasmic side. Residues 87 to 107 (ILLVYFILMFIVYAFEVASCI) traverse the membrane as a helical segment. The Extracellular segment spans residues 108 to 229 (TAATQRDFFT…ELISGPMNRH (122 aa)). A helical transmembrane segment spans residues 230-250 (AWGVAWFGFAILCWTFWVLLG). Topologically, residues 251–260 (TMFYWSRIDY) are cytoplasmic.

The protein belongs to the tetraspanin (TM4SF) family. In terms of assembly, heterodimer with uroplakin-3A (UPK3A) or uroplakin-3B (UPK3B). Post-translationally, N-glycosylated with high-mannose oligosaccharides. In terms of tissue distribution, bladder epithelium.

It is found in the membrane. Functionally, component of the asymmetric unit membrane (AUM); a highly specialized biomembrane elaborated by terminally differentiated urothelial cells. May play an important role in normal bladder epithelial physiology, possibly in regulating membrane permeability of superficial umbrella cells or in stabilizing the apical membrane through AUM/cytoskeletal interactions. The polypeptide is Uroplakin-1b (UPK1B) (Bos taurus (Bovine)).